A 619-amino-acid chain; its full sequence is ATP-dependent RNA helicase DBP8 (619 aa).

The disordered stretch occupies residues 1–149; that stretch reads MAVSKKSRKS…NGLPSASKPS (149 aa). The span at 46-67 shows a compositional bias: acidic residues; it reads EGNDESDEEDDDVSNEGEDEGE. Over residues 68–78 the composition is skewed to low complexity; that stretch reads SSGSEAESSVA. A compositionally biased stretch (acidic residues) spans 93–105; sequence LDAEGEEDKENEE. Polar residues predominate over residues 137–147; that stretch reads PQPNGLPSASK. Positions 152 to 180 match the Q motif motif; it reads VTFESLGLSRPLITALASINIKKPTEIQA. In terms of domain architecture, Helicase ATP-binding spans 183–356; it reads VEPILSGRDC…NKEPPAGKQR (174 aa). Position 196–203 (196–203) interacts with ATP; the sequence is AKTGSGKT. The short motif at 304–307 is the DEAD box element; it reads DEAD. A disordered region spans residues 414–436; the sequence is EREAALGKKGKKPKQAKEEEDAP. In terms of domain architecture, Helicase C-terminal spans 430–572; it reads KEEEDAPSVP…ELKLDEDKVL (143 aa).

It belongs to the DEAD box helicase family. DDX49/DBP8 subfamily.

Its subcellular location is the nucleus. The protein resides in the nucleolus. The enzyme catalyses ATP + H2O = ADP + phosphate + H(+). Its function is as follows. ATP-binding RNA helicase involved in 40S ribosomal subunit biogenesis and is required for the normal formation of 18S rRNAs through pre-rRNA processing at A0, A1 and A2 sites. Required for vegetative growth. The sequence is that of ATP-dependent RNA helicase DBP8 (DBP8) from Cryptococcus neoformans var. neoformans serotype D (strain B-3501A) (Filobasidiella neoformans).